We begin with the raw amino-acid sequence, 121 residues long: C-X-C motif chemokine 11-6 (121 aa).

The N-terminal stretch at 1–20 (MKTLAAFLLLSCLIAGEVNG) is a signal peptide. 2 disulfide bridges follow: cysteine 29-cysteine 56 and cysteine 31-cysteine 73. Residues 95-121 (QSVPHSTTTGTVKSSMTSSTSAPTAFK) are disordered. Over residues 100 to 115 (STTTGTVKSSMTSSTS) the composition is skewed to low complexity.

Belongs to the intercrine alpha (chemokine CxC) family.

The protein localises to the secreted. Ligand for cxcr3.2. Chemotactic for macrophages. This Danio rerio (Zebrafish) protein is C-X-C motif chemokine 11-6.